The primary structure comprises 607 residues: Arginine decarboxylase (607 aa).

Lysine 104 bears the N6-(pyridoxal phosphate)lysine mark. Residue 290–300 (LDCGGGLGVDY) coordinates substrate.

This sequence belongs to the Orn/Lys/Arg decarboxylase class-II family. SpeA subfamily. Pyridoxal 5'-phosphate serves as cofactor. Mg(2+) is required as a cofactor.

The enzyme catalyses L-arginine + H(+) = agmatine + CO2. It participates in amine and polyamine biosynthesis; agmatine biosynthesis; agmatine from L-arginine: step 1/1. The polypeptide is Arginine decarboxylase (SPE1) (Avena sativa (Oat)).